A 440-amino-acid chain; its full sequence is Xylose isomerase (440 aa).

Residues His-100 and Asp-103 contribute to the active site. Mg(2+) is bound by residues Glu-231, Glu-267, His-270, Asp-295, Asp-306, Asp-308, and Asp-338.

Belongs to the xylose isomerase family. In terms of assembly, homotetramer. Mg(2+) serves as cofactor.

Its subcellular location is the cytoplasm. It catalyses the reaction alpha-D-xylose = alpha-D-xylulofuranose. This Burkholderia thailandensis (strain ATCC 700388 / DSM 13276 / CCUG 48851 / CIP 106301 / E264) protein is Xylose isomerase.